Consider the following 515-residue polypeptide: Na(+)/H(+) antiporter NhaB (515 aa).

The next 11 membrane-spanning stretches (helical) occupy residues Leu-23–Val-43, Gly-45–Leu-65, Val-96–Phe-116, Cys-136–Ile-156, Leu-204–Pro-224, Ala-245–Phe-265, Ala-305–Ile-325, Phe-349–Ile-369, Leu-393–Val-413, Ala-449–Ile-469, and Ala-480–Ile-500.

The protein belongs to the NhaB Na(+)/H(+) (TC 2.A.34) antiporter family.

It is found in the cell inner membrane. It carries out the reaction 2 Na(+)(in) + 3 H(+)(out) = 2 Na(+)(out) + 3 H(+)(in). Functionally, na(+)/H(+) antiporter that extrudes sodium in exchange for external protons. The chain is Na(+)/H(+) antiporter NhaB from Photorhabdus laumondii subsp. laumondii (strain DSM 15139 / CIP 105565 / TT01) (Photorhabdus luminescens subsp. laumondii).